The primary structure comprises 92 residues: UPF0213 protein MGAS9429_Spy1198 (92 aa).

Residues 4-80 (KKAYMYVLEC…KRKTRSQKLA (77 aa)) form the GIY-YIG domain.

The protein belongs to the UPF0213 family.

This Streptococcus pyogenes serotype M12 (strain MGAS9429) protein is UPF0213 protein MGAS9429_Spy1198.